We begin with the raw amino-acid sequence, 255 residues long: 3-oxoacyl-[acyl-carrier-protein] reductase MabA (255 aa).

NADP(+) is bound by residues 32–35 (NRGI), Arg-55, 69–70 (DV), Gly-98, Tyr-161, Lys-165, Ile-194, and Arg-205. The active-site Proton acceptor is Tyr-161.

This sequence belongs to the short-chain dehydrogenases/reductases (SDR) family. In terms of assembly, homotetramer.

It is found in the secreted. Its subcellular location is the cell wall. The catalysed reaction is a (3R)-hydroxyacyl-[ACP] + NADP(+) = a 3-oxoacyl-[ACP] + NADPH + H(+). It catalyses the reaction a (3R)-3-hydroxyacyl-CoA + NADP(+) = a 3-oxoacyl-CoA + NADPH + H(+). It carries out the reaction (3R)-3-hydroxybutanoyl-CoA + NADP(+) = acetoacetyl-CoA + NADPH + H(+). The enzyme catalyses (3R)-hydroxyoctanoyl-CoA + NADP(+) = 3-oxooctanoyl-CoA + NADPH + H(+). It functions in the pathway lipid metabolism; mycolic acid biosynthesis. Its function is as follows. Part of the mycobacterial fatty acid elongation system FAS-II, which is involved in mycolic acid biosynthesis. Catalyzes the NADPH-dependent reduction of beta-ketoacyl derivatives, the second step of the FAS-II elongation cycle. Has a preference for longer substrates. Can use CoA derivatives as substrates in vitro. The sequence is that of 3-oxoacyl-[acyl-carrier-protein] reductase MabA from Mycolicibacterium smegmatis (strain ATCC 700084 / mc(2)155) (Mycobacterium smegmatis).